The primary structure comprises 5255 residues: Bacitracin synthase 1 (5255 aa).

A domain 1 (isoleucine-activating) region spans residues 39-612 (LHELFEEQAM…IKELSAFIEA (574 aa)). A compositionally biased stretch (basic and acidic residues) spans 519–531 (VDRKALPEPDRTA). The segment at 519 to 542 (VDRKALPEPDRTAGAENEYEAPRN) is disordered. The region spanning 539-614 (APRNETEEKL…ELSAFIEANH (76 aa)) is the Carrier 1 domain. Position 574 is an O-(pantetheine 4'-phosphoryl)serine (S574). The interval 621–1037 (TLVTRAADPE…ITWDYVEQIF (417 aa)) is cyclization. A domain 2 (cysteine-activating) region spans residues 1109 to 1648 (HHDEVMTYQE…FKNDTIIALD (540 aa)). 4 consecutive Carrier domains span residues 1580–1655 (LPEN…KNRE), 2616–2691 (APRD…VRRR), 3659–3733 (PPRN…TEET), and 5166–5241 (APRN…LTAE). 4 positions are modified to O-(pantetheine 4'-phosphoryl)serine: S1615, S2651, S3694, and S5201. Positions 2124–2689 (GKAIHQLFEE…IKGLRDISVR (566 aa)) are domain 3 (leucine-activating). The segment at 3164–3732 (DHPAVAFGDE…KDLSRFITEE (569 aa)) is domain 4 (glutamine-activating). Positions 4668–5249 (LHELFEEQAM…AEAESAVSEE (582 aa)) are domain 5 (isoleucine-activating).

This sequence belongs to the ATP-dependent AMP-binding enzyme family. As to quaternary structure, large multienzyme complex of BA1, BA2 and BA3. Requires pantetheine 4'-phosphate as cofactor.

It catalyses the reaction L-glutamate = D-glutamate. The protein operates within antibiotic biosynthesis; bacitracin biosynthesis. Activates five amino acids, incorporates two D-amino acids, releases and cyclizes the mature bacitracin. In Bacillus licheniformis, this protein is Bacitracin synthase 1 (bacA).